Here is a 58-residue protein sequence, read N- to C-terminus: Small ribosomal subunit protein bS21C (58 aa).

The disordered stretch occupies residues 38-58 (YEKPSLRRKRKAEAARKGGRY). Basic and acidic residues predominate over residues 49–58 (AEAARKGGRY).

This sequence belongs to the bacterial ribosomal protein bS21 family.

This Nostoc sp. (strain PCC 7120 / SAG 25.82 / UTEX 2576) protein is Small ribosomal subunit protein bS21C (rpsU3).